Consider the following 526-residue polypeptide: Acid-sensing ion channel 1 (526 aa).

The Cytoplasmic portion of the chain corresponds to 1 to 49; that stretch reads MELKTEEEEVGGVQPVSIQAFASSSTLHGLAHIFSYERLSLKRALWALC. A helical transmembrane segment spans residues 50–66; sequence FLGSLAVLLCVCTERVQ. Residues 67–425 are Extracellular-facing; the sequence is YYFCYHHVTK…ETIEQKKAYE (359 aa). 7 disulfide bridges follow: cysteine 93/cysteine 194, cysteine 172/cysteine 179, cysteine 290/cysteine 365, cysteine 308/cysteine 361, cysteine 312/cysteine 359, cysteine 321/cysteine 343, and cysteine 323/cysteine 335. N-linked (GlcNAc...) asparagine glycosylation is found at asparagine 366 and asparagine 393. A discontinuously helical membrane pass occupies residues 426 to 456; sequence IAGLLGDIGGQMGLFIGASILTVLELFDYAY. Residues 442–444 carry the GAS motif; ion selectivity filter motif; the sequence is GAS. At 457–526 the chain is on the cytoplasmic side; it reads EVIKHRLCRR…ARGTFEDFTC (70 aa). Phosphoserine is present on residues serine 477 and serine 497.

It belongs to the amiloride-sensitive sodium channel (TC 1.A.6) family. ASIC1 subfamily. Homotrimer. Heterotrimer; with other ASIC proteins producing channel with different properties. Interacts with PICK1; regulates ASIC1 clustering in membranes. Interacts with STOM; alters heterotrimeric ASIC channels activity. PH-gating could be regulated by serine proteases. Post-translationally, phosphorylation by PKA regulates interaction with PICK1 and subcellular localization. Phosphorylation by PKC may regulate the channel. As to expression, expressed in dorsal root ganglia and sciatic nerve (at protein level). Widely distributed throughout the brain. Expressed in olfactory bulb, neo and allocortical regions, dentate granule cells, pyramidal cells of CA1-CA3 subfields of the hippocampal formation, habenula, basolateral amygdaloid nuclei, and in the Purkinje and granule cells of the cerebellum. Diffusely detected over most other regions of the basal ganglia, including thalamic nuclei, substantia nigra, striatum and globus pallidus, hypothalamus, midbrain, pons, medulla and choroid plexus. In terms of tissue distribution, expressed only in dorsal root ganglion (DRG). Expressed exclusively in trigeminal ganglion and dorsal root ganglion.

It is found in the cell membrane. Its subcellular location is the postsynaptic cell membrane. It localises to the cell projection. The protein resides in the dendrite. The catalysed reaction is Na(+)(in) = Na(+)(out). It carries out the reaction Li(+)(in) = Li(+)(out). It catalyses the reaction K(+)(in) = K(+)(out). The enzyme catalyses Ca(2+)(in) = Ca(2+)(out). The catalysed reaction is H(+)(in) = H(+)(out). Inhibited by the diuretic drug amiloride. External calcium is required to potentiate proton activation of ASIC1 at physiological concentrations, but at higher, non-physiological concentrations, it inhibits activation. Also potentiated by other multivalent cations like Mg(2+), Ba(2+). Activated by FMRFamide-related neuropeptides. Inhibited by anti-inflammatory drugs like salicylic acid. The spider venom psalmotoxin-1 specifically inhibits the ASIC1 homotrimer. The snake venom mambalgin-1, mambalgin-2 and mambalgin-3 inhibit the homotrimer of Asic1a (ASIC1 isoform 1). The snake venom mambalgin-1 and mambalgin-2 inhibit heterotrimers of Asic1a-Asic1b (ASIC1 isoform 1-ASIC1 isoform 3). Heterotrimer of Asic1a-Asic2a is inhibited by the snake venom mambalgin-1, mambalgin-2 and mambalgin-3. Heterotrimer of Asic1a-Asic2b is inhibited by the snake venom mambalgin-1 and mambalgin-2. The spider venom Pi-theraphotoxin-Hm3a inhibits the homotrimer of Asic1a (ASIC1 isoform 1). The spider venom Pi-theraphotoxin-Hm3a inhibits heterotrimers of Asic1a-Asic1b (ASIC1 isoform 1-ASIC1 isoform 3). The spider venom Pi-hexatoxin-Hi1a inhibits the ASIC1 homotrimer. With respect to regulation, not inhibited by extracellular calcium. In terms of biological role, forms voltage-independent, pH-gated trimeric sodium channels that act as postsynaptic excitatory receptors in the nervous system, playing a crucial role in regulating synaptic plasticity, learning, and memory. Upon extracellular pH drop this channel elicits transient, fast activating, and completely desensitizing inward currents. Displays high selectivity for sodium ions but can also permit the permeation of other cations. Regulates more or less directly intracellular calcium concentration and CaMKII phosphorylation, and thereby the density of dendritic spines. Modulates neuronal activity in the circuits underlying innate fear. Functionally, permeable to other cations including calcium, lithium and potassium. PH activation and steady-state inactivation are shifted to more acidic values. Forms channels that are not permeable to calcium as it discrimates stronger between monovalent cations. Its function is as follows. Has no pH-gated sodium channel activity per se but can associate with other ASICs and regulate their pH-sensitivity. This Rattus norvegicus (Rat) protein is Acid-sensing ion channel 1.